The sequence spans 232 residues: uncharacterized protein (232 aa).

This is an uncharacterized protein from Eriophyes pyri (pearleaf blister mite).